The chain runs to 368 residues: Cobalt-precorrin-5B C(1)-methyltransferase (368 aa).

It belongs to the CbiD family.

It catalyses the reaction Co-precorrin-5B + S-adenosyl-L-methionine = Co-precorrin-6A + S-adenosyl-L-homocysteine. The protein operates within cofactor biosynthesis; adenosylcobalamin biosynthesis; cob(II)yrinate a,c-diamide from sirohydrochlorin (anaerobic route): step 6/10. In terms of biological role, catalyzes the methylation of C-1 in cobalt-precorrin-5B to form cobalt-precorrin-6A. The sequence is that of Cobalt-precorrin-5B C(1)-methyltransferase from Brucella ovis (strain ATCC 25840 / 63/290 / NCTC 10512).